The following is a 1666-amino-acid chain: Probable clathrin heavy chain (1666 aa).

WD40-like repeat stretches follow at residues 24-67, 68-107, 108-148, 149-194, 195-255, 256-299, and 300-328; these read SFGF…RPIS, ADSV…MNQD, VVYW…SSLN, GTQI…QPLE, SHAS…PEAV, NDFP…VSGE, and SIFV…VSIN. The residue at position 392 (Thr392) is a Phosphothreonine. Ser393 is modified (phosphoserine). CHCR repeat units follow at residues 534-680, 683-825, 830-969, 975-1120, 1124-1265, 1270-1415, and 1418-1561; these read MFNS…QIVV, ATRY…DEEL, LMSV…LLDQ, VPES…IPDA, YLKA…FRLA, LNLI…MLLT, and LAAL…YECF.

It belongs to the clathrin heavy chain family. As to quaternary structure, clathrin triskelions, composed of 3 heavy chains and 3 light chains, are the basic subunits of the clathrin coat.

It localises to the cytoplasmic vesicle membrane. It is found in the membrane. Its subcellular location is the coated pit. Its function is as follows. Clathrin is the major protein of the polyhedral coat of coated pits and vesicles. This is Probable clathrin heavy chain (chc1) from Schizosaccharomyces pombe (strain 972 / ATCC 24843) (Fission yeast).